A 384-amino-acid chain; its full sequence is MATGDVKGCIRKLEQRLRTLNYPRDVDYTGLIKGDPSASLPIISYTFTCYSTSIAEILISFGIELTTKSDLRFIEAVYKVLRDVFNYKPILTKQQFLQCAFSERKIQIICDIVDCVVKKHKEITGQNKVKSQLVKKVVSAKDQCEVFYPEDVSVQPSVKTTQKKPLVERHAGSEFLLPTKCYSSALVEDIEEEEPTSDSEGGSHLEHEMESPFETAETTPNSEQIELLRKQLAECQEKLQRLDCVEQRLQSLETSMKGKIIIDETDWNNLLSRVLLLETEGLLQSKKTDFSVPSEFACISEQRTSSRMTNEICSNLKTKADIPESHHQSSGYSFVLSADTSPIAIDINYSSLTEDSNETTKQRMERITKMMEETSKLLKCSNNT.

Residues 11–188 (RKLEQRLRTL…TKCYSSALVE (178 aa)) form a binds with microtubules and centrioles region. The tract at residues 191–222 (EEEEPTSDSEGGSHLEHEMESPFETAETTPNS) is disordered. A compositionally biased stretch (basic and acidic residues) spans 201–210 (GGSHLEHEME). 2 coiled-coil regions span residues 221–260 (NSEQ…KGKI) and 353–378 (TEDS…SKLL).

As to quaternary structure, binds to centriolar microtubules.

It is found in the cytoplasm. The protein resides in the cytoskeleton. The protein localises to the microtubule organizing center. Its subcellular location is the centrosome. It localises to the centriole. It is found in the spindle pole. The protein resides in the midbody. Centriole-enriched microtubule-binding protein involved in centriole biogenesis. In collaboration with CEP295 and POC1B, is required for the centriole-to-centrosome conversion by ensuring the formation of bona fide centriole wall. Functions as a linker component that maintains centrosome cohesion. Associates with CROCC and regulates its stability and localization to the centrosome. The protein is Centrosomal protein of 44 kDa (cep44) of Xenopus laevis (African clawed frog).